The chain runs to 51 residues: Large ribosomal subunit protein bL33 (51 aa).

It belongs to the bacterial ribosomal protein bL33 family.

The chain is Large ribosomal subunit protein bL33 from Idiomarina loihiensis (strain ATCC BAA-735 / DSM 15497 / L2-TR).